Reading from the N-terminus, the 494-residue chain is UDP-N-acetylmuramoyl-L-alanyl-D-glutamate--L-lysine ligase (494 aa).

Ser-30 is a UDP-N-acetyl-alpha-D-muramoyl-L-alanyl-D-glutamate binding site. Residue 110 to 116 (GTNGKTS) participates in ATP binding. UDP-N-acetyl-alpha-D-muramoyl-L-alanyl-D-glutamate-binding positions include 152-153 (TT), Ser-179, and Arg-187. Residue Lys-219 is modified to N6-carboxylysine. The short motif at 406–409 (DNPA) is the L-lysine recognition motif element.

The protein belongs to the MurCDEF family. MurE subfamily. In terms of processing, carboxylation is probably crucial for Mg(2+) binding and, consequently, for the gamma-phosphate positioning of ATP.

Its subcellular location is the cytoplasm. It catalyses the reaction UDP-N-acetyl-alpha-D-muramoyl-L-alanyl-D-glutamate + L-lysine + ATP = UDP-N-acetyl-alpha-D-muramoyl-L-alanyl-gamma-D-glutamyl-L-lysine + ADP + phosphate + H(+). The protein operates within cell wall biogenesis; peptidoglycan biosynthesis. In terms of biological role, catalyzes the addition of L-lysine to the nucleotide precursor UDP-N-acetylmuramoyl-L-alanyl-D-glutamate (UMAG) in the biosynthesis of bacterial cell-wall peptidoglycan. The polypeptide is UDP-N-acetylmuramoyl-L-alanyl-D-glutamate--L-lysine ligase (Staphylococcus aureus (strain MW2)).